A 581-amino-acid chain; its full sequence is Suppressor of cytokine signaling 7 (581 aa).

4 disordered regions span residues 1 to 23, 89 to 109, 123 to 272, and 297 to 316; these read MVFR…EPGP, PPPP…DPTE, EAES…RTQS, and QRGL…RRSL. Pro residues-rich tracts occupy residues 89-99, 154-164, and 187-198; these read PPPPQPQPPAA, PPGPELPPVPF, and QPPPPPPPPGPL. The mediates interaction with SORBS3 stretch occupies residues 124-494; sequence AESLETNSCS…GKFLYFLRSR (371 aa). Residues 208 to 219 show a composition bias toward basic residues; it reads GSFKIRLSRLFR. The span at 303–313 shows a compositional bias: pro residues; it reads PHPPTPPPPPR. The SH2 domain occupies 400 to 509; sequence WYWGPMNWED…PTPVQLLYPV (110 aa). One can recognise an SOCS box domain in the interval 504 to 554; it reads QLLYPVSRFSNVKSLQHLCRFRIRQLVRIDHIPDLPLPKPLISYIRKFYYY.

Substrate-recognition component of the ECS(SOCS7) complex, composed of SOCS7, CUL5, ELOB, ELOC and RNF7/RBX2. Interacts, via the third proline-rich region, with the second SH3 domain of the adapter protein NCK1. Also interacts with GRB2, INSR, PLCG1, SORBS3/vinexin, and phosphorylated STAT3 and STAT5. Interacts with SEPT6. Interacts with phosphorylated IRS4 and PIK3R1. In terms of tissue distribution, expressed in brain and leukocytes. Also in fetal lung fibroblasts and fetal brain.

It localises to the cytoplasm. Its subcellular location is the nucleus. The protein resides in the cell membrane. The protein operates within protein modification; protein ubiquitination. Substrate-recognition component of a cullin-5-RING E3 ubiquitin-protein ligase complex (ECS complex, also named CRL5 complex), which mediates the ubiquitination and subsequent proteasomal degradation of target proteins, such as DAB1 and IRS1. Specifically recognizes and binds phosphorylated proteins via its SH2 domain, promoting their ubiquitination. The ECS(SOCS7) complex acts as a key regulator of reelin signaling by mediating ubiquitination and degradation of phosphorylated DAB1 in the cortical plate of the developing cerebral cortex, thereby regulating neuron positioning during cortex development. Functions in insulin signaling and glucose homeostasis through IRS1 ubiquitination and subsequent proteasomal degradation. Also inhibits prolactin, growth hormone and leptin signaling by preventing STAT3 and STAT5 activation, sequestering them in the cytoplasm and reducing their binding to DNA. In Homo sapiens (Human), this protein is Suppressor of cytokine signaling 7.